A 1499-amino-acid chain; its full sequence is Pleiotropic ABC efflux transporter of multiple drugs CDR1 (1499 aa).

A compositionally biased stretch (basic and acidic residues) spans 1–11 (MSLASDKKDAD). Residues 1-29 (MSLASDKKDADVASTTTTAQDDDNLSTYH) form a disordered region. N-linked (GlcNAc...) asparagine glycans are attached at residues Asn24, Asn96, and Asn99. The 254-residue stretch at 146 to 399 (VYNTVVPSTA…FQKMGYVSPE (254 aa)) folds into the ABC transporter 1 domain. Residue Ser307 is modified to Phosphoserine. Residue Asn323 is glycosylated (N-linked (GlcNAc...) asparagine). A Phosphoserine modification is found at Ser484. A helical transmembrane segment spans residues 510-530 (GVTLFMVIGNSSMAFILGSMF). Residue Asn537 is glycosylated (N-linked (GlcNAc...) asparagine). Transmembrane regions (helical) follow at residues 548–568 (AMFF…FSLF), 597–617 (VPAK…LVNF), 622–642 (GVFF…SHLF), 654–674 (AAMV…GFAI), and 763–783 (GFGI…ILCE). A glycan (N-linked (GlcNAc...) asparagine) is linked at Asn813. Positions 857–1099 (FHWRNLCYDV…TMIDYFESHG (243 aa)) constitute an ABC transporter 2 domain. 893 to 900 (GASGAGKT) provides a ligand contact to ATP. Asn1159 carries an N-linked (GlcNAc...) asparagine glycan. 3 helical membrane-spanning segments follow: residues 1193 to 1213 (YLWS…FTFF), 1228 to 1248 (AVFM…PSFV), and 1278 to 1298 (IPWN…AIGF). Asn1301 carries N-linked (GlcNAc...) asparagine glycosylation. A run of 2 helical transmembrane segments spans residues 1314–1334 (LFWL…LFCI) and 1342–1362 (AAAN…GVLV). Asn1412 carries N-linked (GlcNAc...) asparagine glycosylation. A helical transmembrane segment spans residues 1466–1486 (WGIFICYIAFNYIAGIFLYWL).

It belongs to the ABC transporter superfamily. In terms of processing, phosphorylated at Ser-307 and Ser-484. Ser-307 and Ser-484 are dephosphorylated on glucose depletion and independently rephosphorylated during glucose exposure or under stress.

It is found in the cell membrane. With respect to regulation, inhibited by clorgyline. Inhibited by RC21v3, a 4-methoxy-2,3,6-trimethylbenzenesulphonyl derivative of the D-octapeptide D-FFKWQRRR, via the interaction with the ectodomain. FK506, enniatin, milbemycin alpha-11, and milbemycin beta-9 also inhibit CDR1 activity. Inhibited by milbemycin A3/A4 oxim derivatives. Pleiotropic ABC efflux transporter that transports and confers resistance to structurally and functionally unrelated compounds including rhodamine 6G, Nile red, caspofungin, cycloheximide, or azoles such as fluconazole, itraconazole, ketoconazole, posaconazole, voriconazole, and isavuconazole. Chlorbromuron, itraconazole, yohimbine, ketoconazole, miconazole, clotrimazole, DE-11, tamoxifen, quinidine, verapamil can compete for rhodamine 6G's binding site(s) while compounds such as propanil, chloramphenicol, benomyl, voriconazole, tritylimidazole, ketoconazole, miconazole, tamoxifen, gefitinib shared binding site(s) with fluconazole. Nile red mediated efflux appears to be relatively more specific since only five compounds such as ZW3-12, rhodamine 123, miconazole, clotrimazole, and itraconazole can inhibit its accumulation. Does not use as substrates 4-nitroquinoline 1-oxide (4-NQO) and disulfiram. Does not play a role in the azole resistance in mature biofilms. The sequence is that of Pleiotropic ABC efflux transporter of multiple drugs CDR1 from Candida glabrata (strain ATCC 2001 / BCRC 20586 / JCM 3761 / NBRC 0622 / NRRL Y-65 / CBS 138) (Yeast).